The sequence spans 386 residues: Putative membrane-bound transacylase BcsY (386 aa).

The next 10 membrane-spanning stretches (helical) occupy residues 37-57 (LAIA…FIGV), 91-111 (LLPA…WWVL), 118-138 (IALN…SGHV), 156-176 (LSLE…LPLT), 181-201 (LVLS…WHTG), 237-257 (AVYA…PLSY), 258-278 (ACPS…IMLP), 290-310 (LSPL…GIVV), 322-342 (AMMA…YVLV), and 362-382 (AALL…ISHV).

Belongs to the acyltransferase 3 family.

It is found in the cell inner membrane. It functions in the pathway glycan metabolism; bacterial cellulose biosynthesis. Functionally, may acylate a glucose moiety into cellulose fibrils, in cooperation with BcsABII and BcsCII. The protein is Putative membrane-bound transacylase BcsY (bcsY) of Komagataeibacter xylinus (Gluconacetobacter xylinus).